The following is a 1323-amino-acid chain: Inositol hexakisphosphate and diphosphoinositol-pentakisphosphate kinase (1323 aa).

26–27 provides a ligand contact to substrate; sequence RK. Residues Arg109, Lys162, His169, Arg188, 212 to 215, and 221 to 223 each bind ATP; these read EEFI and DVK. Residue 188 to 189 coordinates substrate; the sequence is RK. Residues Lys223 and Arg237 each coordinate substrate. ATP contacts are provided by residues Asp284 and 296-298; that span reads DVN. 301–304 serves as a coordination point for substrate; it reads SFVK. The tract at residues 355 to 426 is polyphosphoinositide-binding domain; it reads TTPSGKLAEL…VLELARALVI (72 aa). Composition is skewed to polar residues over residues 933–947 and 977–992; these read FNLS…SSRS and VTPT…NDDL. 3 disordered regions span residues 933 to 1022, 1043 to 1107, and 1134 to 1155; these read FNLS…SEDD, AMAD…GGGK, and IVIP…ASER. Residues 993–1006 are compositionally biased toward low complexity; it reads SISSNAESTAAEST. Basic and acidic residues predominate over residues 1062-1074; the sequence is KSMEEGDKPHGEW. Positions 1090 to 1101 are enriched in low complexity; the sequence is SNEMESNNESME.

The protein belongs to the histidine acid phosphatase family. VIP1 subfamily.

It localises to the cytoplasm. It is found in the cytosol. It catalyses the reaction 1D-myo-inositol hexakisphosphate + ATP = 1-diphospho-1D-myo-inositol 2,3,4,5,6-pentakisphosphate + ADP. The enzyme catalyses 5-diphospho-1D-myo-inositol 1,2,3,4,6-pentakisphosphate + ATP + H(+) = 1,5-bis(diphospho)-1D-myo-inositol 2,3,4,6-tetrakisphosphate + ADP. Bifunctional inositol kinase that acts in concert with the IP6K kinases to synthesize the diphosphate group-containing inositol pyrophosphates diphosphoinositol pentakisphosphate, PP-InsP5, and bis-diphosphoinositol tetrakisphosphate, (PP)2-InsP4. PP-InsP5 and (PP)2-InsP4, also respectively called InsP7 and InsP8, may regulate a variety of cellular processes, including apoptosis, vesicle trafficking, cytoskeletal dynamics, and exocytosis. Phosphorylates inositol hexakisphosphate (InsP6) at position 1 to produce PP-InsP5 which is in turn phosphorylated by IP6Ks to produce (PP)2-InsP4. Alternatively, phosphorylates PP-InsP5 at position 1, produced by IP6Ks from InsP6, to produce (PP)2-InsP4. The sequence is that of Inositol hexakisphosphate and diphosphoinositol-pentakisphosphate kinase from Caenorhabditis elegans.